Consider the following 494-residue polypeptide: Serine carboxypeptidase-like 21 (494 aa).

A signal peptide spans 1 to 23 (MGRLVEAIIASILLSLCFTITKS). N37 and N69 each carry an N-linked (GlcNAc...) asparagine glycan. Cystine bridges form between C85-C383, C247-C263, and C286-C350. The active site involves S179. 2 N-linked (GlcNAc...) asparagine glycosylation sites follow: N198 and N248. N402 carries an N-linked (GlcNAc...) asparagine glycan. Residue D418 is part of the active site. The N-linked (GlcNAc...) asparagine glycan is linked to N460. The active site involves H471.

The protein belongs to the peptidase S10 family. In terms of tissue distribution, expressed in flowers and siliques.

It localises to the secreted. Probable carboxypeptidase. The polypeptide is Serine carboxypeptidase-like 21 (SCPL21) (Arabidopsis thaliana (Mouse-ear cress)).